Consider the following 320-residue polypeptide: ATP-dependent 6-phosphofructokinase (320 aa).

Gly-12 serves as a coordination point for ATP. Residues 22–26 (RGVVR) and 55–60 (RYSVSD) contribute to the ADP site. ATP contacts are provided by residues 73-74 (RF) and 103-106 (GDGS). Residue Asp-104 coordinates Mg(2+). 126–128 (TID) contacts substrate. Asp-128 acts as the Proton acceptor in catalysis. Arg-155 contacts ADP. Residues Arg-163 and 170–172 (MGR) each bind substrate. ADP is bound by residues 186-188 (GCE), Lys-212, and 214-216 (KKH). Substrate-binding positions include Glu-223, Arg-244, and 250–253 (HIQR).

This sequence belongs to the phosphofructokinase type A (PFKA) family. ATP-dependent PFK group I subfamily. Prokaryotic clade 'B1' sub-subfamily. Homotetramer. It depends on Mg(2+) as a cofactor.

It is found in the cytoplasm. The catalysed reaction is beta-D-fructose 6-phosphate + ATP = beta-D-fructose 1,6-bisphosphate + ADP + H(+). Its pathway is carbohydrate degradation; glycolysis; D-glyceraldehyde 3-phosphate and glycerone phosphate from D-glucose: step 3/4. With respect to regulation, allosterically activated by ADP and other diphosphonucleosides, and allosterically inhibited by phosphoenolpyruvate. Catalyzes the phosphorylation of D-fructose 6-phosphate to fructose 1,6-bisphosphate by ATP, the first committing step of glycolysis. In Sodalis glossinidius (strain morsitans), this protein is ATP-dependent 6-phosphofructokinase.